The sequence spans 247 residues: Centromere protein H (247 aa).

An N-acetylmethionine modification is found at Met-1. The span at 1–14 (MEEQPQMQDADEPA) shows a compositional bias: acidic residues. Residues 1–34 (MEEQPQMQDADEPADSGGEGRAGGPPQVAGAQAA) are disordered. At Ser-16 the chain carries Phosphoserine. Residues 24 to 34 (GPPQVAGAQAA) are compositionally biased toward low complexity. The stretch at 47-192 (RAQTKQQLLE…KIDLDSMENS (146 aa)) forms a coiled coil. A Glycyl lysine isopeptide (Lys-Gly) (interchain with G-Cter in SUMO2) cross-link involves residue Lys-67. Position 68 is a phosphothreonine (Thr-68).

It belongs to the CENP-H/MCM16 family. As to quaternary structure, self-associates. Component of the CENPA-NAC complex, at least composed of CENPA, CENPC, CENPH, CENPM, CENPN, CENPT and CENPU. The CENPA-NAC complex interacts with the CENPA-CAD complex, composed of CENPI, CENPK, CENPL, CENPO, CENPP, CENPQ, CENPR and CENPS. Interacts directly with CENPK. Interacts with KIF2C and NDC80. Interacts with TRIM36.

It is found in the nucleus. The protein resides in the chromosome. Its subcellular location is the centromere. It localises to the kinetochore. In terms of biological role, component of the CENPA-NAC (nucleosome-associated) complex, a complex that plays a central role in assembly of kinetochore proteins, mitotic progression and chromosome segregation. The CENPA-NAC complex recruits the CENPA-CAD (nucleosome distal) complex and may be involved in incorporation of newly synthesized CENPA into centromeres. Required for chromosome congression and efficiently align the chromosomes on a metaphase plate. The protein is Centromere protein H of Homo sapiens (Human).